A 358-amino-acid polypeptide reads, in one-letter code: Peptide chain release factor 1 (358 aa).

Gln-234 carries the post-translational modification N5-methylglutamine.

Belongs to the prokaryotic/mitochondrial release factor family. Post-translationally, methylated by PrmC. Methylation increases the termination efficiency of RF1.

It is found in the cytoplasm. Peptide chain release factor 1 directs the termination of translation in response to the peptide chain termination codons UAG and UAA. The chain is Peptide chain release factor 1 from Leifsonia xyli subsp. xyli (strain CTCB07).